We begin with the raw amino-acid sequence, 428 residues long: Putative aspergillopepsin A-like aspartic endopeptidase AFUA_2G15950 (428 aa).

An N-terminal signal peptide occupies residues 1–19 (MHSLQSFLFLLLLGYGVFA). A propeptide spans 20 to 90 (APTSPQAQSQ…GTAANLVTDV (71 aa)) (activation peptide). One can recognise a Peptidase A1 domain in the interval 110 to 425 (FVSPVTIGGQ…DLRGPSIGLA (316 aa)). Asp-126 is an active-site residue. A glycan (N-linked (GlcNAc...) asparagine) is linked at Asn-276. Asp-312 is a catalytic residue. A glycan (N-linked (GlcNAc...) asparagine) is linked at Asn-380.

Belongs to the peptidase A1 family.

The protein localises to the secreted. The sequence is that of Putative aspergillopepsin A-like aspartic endopeptidase AFUA_2G15950 from Aspergillus fumigatus (strain ATCC MYA-4609 / CBS 101355 / FGSC A1100 / Af293) (Neosartorya fumigata).